We begin with the raw amino-acid sequence, 240 residues long: Phosphoribosylaminoimidazole-succinocarboxamide synthase (240 aa).

The protein belongs to the SAICAR synthetase family.

It catalyses the reaction 5-amino-1-(5-phospho-D-ribosyl)imidazole-4-carboxylate + L-aspartate + ATP = (2S)-2-[5-amino-1-(5-phospho-beta-D-ribosyl)imidazole-4-carboxamido]succinate + ADP + phosphate + 2 H(+). It participates in purine metabolism; IMP biosynthesis via de novo pathway; 5-amino-1-(5-phospho-D-ribosyl)imidazole-4-carboxamide from 5-amino-1-(5-phospho-D-ribosyl)imidazole-4-carboxylate: step 1/2. The protein is Phosphoribosylaminoimidazole-succinocarboxamide synthase of Acidithiobacillus ferrooxidans (strain ATCC 23270 / DSM 14882 / CIP 104768 / NCIMB 8455) (Ferrobacillus ferrooxidans (strain ATCC 23270)).